The primary structure comprises 301 residues: Protease HtpX (301 aa).

2 consecutive transmembrane segments (helical) span residues 4 to 24 (IGLFLLTNLAILVVLGVVLFI) and 44 to 64 (TGLLIIAAVIGFGGSFISLAM). A Zn(2+)-binding site is contributed by His-150. Residue Glu-151 is part of the active site. Residue His-154 coordinates Zn(2+). 2 consecutive transmembrane segments (helical) span residues 165 to 185 (LIQGVVNTFVVFFSRIIGHFV) and 201 to 221 (FITSIFAQIVLGILASVIVMW). Glu-227 provides a ligand contact to Zn(2+).

The protein belongs to the peptidase M48B family. The cofactor is Zn(2+).

The protein localises to the cell inner membrane. The protein is Protease HtpX of Alkalilimnicola ehrlichii (strain ATCC BAA-1101 / DSM 17681 / MLHE-1).